Here is a 292-residue protein sequence, read N- to C-terminus: Elongation factor Ts (292 aa).

The segment at 79–82 (TDFV) is involved in Mg(2+) ion dislocation from EF-Tu.

It belongs to the EF-Ts family.

It is found in the cytoplasm. Functionally, associates with the EF-Tu.GDP complex and induces the exchange of GDP to GTP. It remains bound to the aminoacyl-tRNA.EF-Tu.GTP complex up to the GTP hydrolysis stage on the ribosome. The protein is Elongation factor Ts of Xanthomonas axonopodis pv. citri (strain 306).